Consider the following 115-residue polypeptide: MNRNELFERLMKLEHHVEQLTTDMSELKDLTVELVEENVALQVENENLKRLMNKTEESVETHLDKDNYKHVKTPSPSKDNLAMLYREGFHICKGELFGKHRHGEDCLLCLNVLSD.

Residues His-90, Cys-92, Cys-106, and Cys-109 each contribute to the Zn(2+) site.

Belongs to the YabA family. Homotetramer. Interacts with both DnaA and DnaN, acting as a bridge between these two proteins. The cofactor is Zn(2+).

It localises to the cytoplasm. The protein localises to the nucleoid. In terms of biological role, involved in control of chromosome replication initiation. Inhibits the cooperative binding of DnaA to the oriC region, thus negatively regulating initiation of chromosome replication. Inhibits the ability of DnaA-ATP to form a helix on DNA; does not disassemble preformed DnaA-DNA helices. Decreases the residence time of DnaA on the chromosome at its binding sites (oriC, replication forks and promoter-binding sites). Tethers DnaA to the replication machinery via the DNA polymerase beta sliding clamp subunit (dnaN). Associates with oriC and other DnaA targets on the chromosome in a DnaA-dependent manner. The sequence is that of Replication initiation control protein YabA from Staphylococcus epidermidis (strain ATCC 35984 / DSM 28319 / BCRC 17069 / CCUG 31568 / BM 3577 / RP62A).